The primary structure comprises 528 residues: Oxamate amidohydrolase proenzyme (528 aa).

T342 (nucleophile) is an active-site residue. G424–G425 is a binding site for substrate.

Belongs to the gamma-glutamyltransferase family. Heterodimer that consists of a 35.5 kDa large (alpha) subunit and a 20 kDa small (beta) subunit, which are synthesized from a single polypeptide. In terms of processing, cleaved by autocatalysis into a large (alpha) and a small (beta) subunit.

The catalysed reaction is oxamate + H2O = oxalate + NH4(+). Involved in the uric acid degradation pathway. Catalyzes the conversion of oxamate to oxalate. The chain is Oxamate amidohydrolase proenzyme from Klebsiella pneumoniae subsp. pneumoniae (strain ATCC 700721 / MGH 78578).